The primary structure comprises 833 residues: Leucine--tRNA ligase (833 aa).

The 'HIGH' region motif lies at 41-52; the sequence is PYPSGAGLHVGH. Residues 610–614 carry the 'KMSKS' region motif; sequence KMSKS. Lys-613 contacts ATP.

The protein belongs to the class-I aminoacyl-tRNA synthetase family.

It is found in the cytoplasm. It catalyses the reaction tRNA(Leu) + L-leucine + ATP = L-leucyl-tRNA(Leu) + AMP + diphosphate. This is Leucine--tRNA ligase from Streptococcus pyogenes serotype M2 (strain MGAS10270).